Here is a 247-residue protein sequence, read N- to C-terminus: 5'-nucleotidase SurE (247 aa).

The a divalent metal cation site is built by Asp-8, Asp-9, Ser-39, and Asn-91.

This sequence belongs to the SurE nucleotidase family. A divalent metal cation serves as cofactor.

It is found in the cytoplasm. It catalyses the reaction a ribonucleoside 5'-phosphate + H2O = a ribonucleoside + phosphate. Nucleotidase that shows phosphatase activity on nucleoside 5'-monophosphates. This is 5'-nucleotidase SurE from Leptospira biflexa serovar Patoc (strain Patoc 1 / Ames).